We begin with the raw amino-acid sequence, 27 residues long: Alpha-benincasin (27 aa).

Its function is as follows. Has weak antifungal activity toward C.comatus and P.piricola but not toward M.arachidicola. Inhibits cell-free translation in rabbit reticulocyte lysate system. This chain is Alpha-benincasin, found in Benincasa hispida (Wax gourd).